Reading from the N-terminus, the 608-residue chain is 1-deoxy-D-xylulose-5-phosphate synthase (608 aa).

Residues His-66 and 107 to 109 (GHA) each bind thiamine diphosphate. Asp-138 contributes to the Mg(2+) binding site. Residues 139-140 (GA), Asn-167, Phe-277, and Glu-350 contribute to the thiamine diphosphate site. Mg(2+) is bound at residue Asn-167.

It belongs to the transketolase family. DXPS subfamily. In terms of assembly, homodimer. The cofactor is Mg(2+). Requires thiamine diphosphate as cofactor.

The catalysed reaction is D-glyceraldehyde 3-phosphate + pyruvate + H(+) = 1-deoxy-D-xylulose 5-phosphate + CO2. Its pathway is metabolic intermediate biosynthesis; 1-deoxy-D-xylulose 5-phosphate biosynthesis; 1-deoxy-D-xylulose 5-phosphate from D-glyceraldehyde 3-phosphate and pyruvate: step 1/1. Its function is as follows. Catalyzes the acyloin condensation reaction between C atoms 2 and 3 of pyruvate and glyceraldehyde 3-phosphate to yield 1-deoxy-D-xylulose-5-phosphate (DXP). This is 1-deoxy-D-xylulose-5-phosphate synthase from Thermotoga petrophila (strain ATCC BAA-488 / DSM 13995 / JCM 10881 / RKU-1).